The sequence spans 440 residues: Dihydrolipoyllysine-residue acetyltransferase component of pyruvate dehydrogenase complex (440 aa).

In terms of domain architecture, Lipoyl-binding spans 2–78 (SIEVKMPALS…AVGQVIAVMA (77 aa)). Lys-43 carries the N6-lipoyllysine modification. Residues 91-113 (ASSQISEPSEKADVAQKETADSE) are disordered. The segment covering 98-110 (PSEKADVAQKETA) has biased composition (basic and acidic residues). The Peripheral subunit-binding (PSBD) domain occupies 149-186 (KASPLAKRLAKKNHVDLKQVNGSGPHGRIIKADIEAFI). Over residues 192–202 (ASSNPSVSTPE) the composition is skewed to polar residues. Positions 192-214 (ASSNPSVSTPEASGKITHDTPHN) are disordered. Residue His-412 is part of the active site.

This sequence belongs to the 2-oxoacid dehydrogenase family. As to quaternary structure, forms a 24-polypeptide structural core with octahedral symmetry. (R)-lipoate serves as cofactor.

The enzyme catalyses N(6)-[(R)-dihydrolipoyl]-L-lysyl-[protein] + acetyl-CoA = N(6)-[(R)-S(8)-acetyldihydrolipoyl]-L-lysyl-[protein] + CoA. In terms of biological role, the pyruvate dehydrogenase complex catalyzes the overall conversion of pyruvate to acetyl-CoA and CO(2). It contains multiple copies of three enzymatic components: pyruvate dehydrogenase (E1), dihydrolipoamide acetyltransferase (E2) and lipoamide dehydrogenase (E3). This chain is Dihydrolipoyllysine-residue acetyltransferase component of pyruvate dehydrogenase complex (pdhC), found in Zymomonas mobilis subsp. mobilis (strain ATCC 31821 / ZM4 / CP4).